Consider the following 256-residue polypeptide: Hydroxyethylthiazole kinase (256 aa).

Residue methionine 37 coordinates substrate. 2 residues coordinate ATP: lysine 113 and threonine 159. Residue glycine 186 coordinates substrate.

It belongs to the Thz kinase family. Mg(2+) serves as cofactor.

The enzyme catalyses 5-(2-hydroxyethyl)-4-methylthiazole + ATP = 4-methyl-5-(2-phosphooxyethyl)-thiazole + ADP + H(+). The protein operates within cofactor biosynthesis; thiamine diphosphate biosynthesis; 4-methyl-5-(2-phosphoethyl)-thiazole from 5-(2-hydroxyethyl)-4-methylthiazole: step 1/1. Its function is as follows. Catalyzes the phosphorylation of the hydroxyl group of 4-methyl-5-beta-hydroxyethylthiazole (THZ). This is Hydroxyethylthiazole kinase from Exiguobacterium sibiricum (strain DSM 17290 / CCUG 55495 / CIP 109462 / JCM 13490 / 255-15).